The following is a 2485-amino-acid chain: Tyrosine-protein phosphatase non-receptor type 13 (2485 aa).

The KIND domain maps to 3–190; sequence VSLAEALEVR…SGTDQLSCNS (188 aa). A disordered region spans residues 186–220; the sequence is LSCNSEQKPDRSQAIRDRLRGKGLPTGRSSTSDVL. The span at 192 to 205 shows a compositional bias: basic and acidic residues; sequence QKPDRSQAIRDRLR. At S240 the chain carries Phosphoserine. Residues 260–283 form a disordered region; that stretch reads SDNSGREDSENTFSPYQFKTSGPE. Positions 270 to 279 are enriched in polar residues; the sequence is NTFSPYQFKT. Residues S301 and S302 each carry the phosphoserine modification. Positions 433-467 are disordered; that stretch reads RSEASKRFESSSGLPGVDETLSQGQSQRPSRQYET. Polar residues predominate over residues 452–465; sequence TLSQGQSQRPSRQY. A coiled-coil region spans residues 469 to 504; the sequence is FEGNLINQEIMLKRQEEELMQLQAKMALRQSRLSLY. One can recognise an FERM domain in the interval 572–872; it reads RKVNIMLLNG…YQHKFQLQMR (301 aa). S890, S897, S908, S911, and S914 each carry phosphoserine. Disordered regions lie at residues 947–975 and 995–1049; these read QNSSKEKNDKASWEEKPREMSKSYHDLSQ and TVAE…IEDP. A compositionally biased stretch (basic and acidic residues) spans 950 to 971; that stretch reads SKEKNDKASWEEKPREMSKSYH. Polar residues predominate over residues 1020–1032; it reads KLNNSKSVASLNR. Residues S1029, S1033, and S1085 each carry the phosphoserine modification. Residues 1033-1042 are compositionally biased toward basic and acidic residues; sequence SPERRKHESD. In terms of domain architecture, PDZ 1 spans 1093–1178; the sequence is LVNLKKDAKY…EDVTLVISQP (86 aa). Disordered regions lie at residues 1227–1258 and 1273–1362; these read HISENSFGPSGGLREGSLSSQDSRTESASLSQ and TWQE…SPPK. Composition is skewed to polar residues over residues 1243-1258, 1273-1288, and 1327-1359; these read SLSSQDSRTESASLSQ, TWQESQHGSPSPSVIS, and TYSSSQDHQTPKQESSSSVNTSNKMNFKTFSSS. PDZ domains lie at 1368–1452 and 1501–1588; these read EVEL…LEKG and EVKL…LCRP. Positions 1608-1630 are enriched in polar residues; sequence AQVLPNSSKDSSQPSCVEQSTSS. Disordered stretches follow at residues 1608 to 1665 and 1715 to 1751; these read AQVL…DLVT and PNKPEFEDSNPSPLPPDMAPGQSYQPQSESASSSSMD. Residues 1736–1749 show a composition bias toward low complexity; that stretch reads QSYQPQSESASSSS. PDZ domains are found at residues 1788–1868 and 1882–1965; these read LITL…IGRV and PDIT…ATRN. The tract at residues 1971-1996 is disordered; sequence PSSKRSAVSAPKSTKGNGSYSVGSCS. Polar residues predominate over residues 1973–1996; sequence SKRSAVSAPKSTKGNGSYSVGSCS. The region spanning 2213 to 2467 is the Tyrosine-protein phosphatase domain; the sequence is PSKELENLQE…IFCYQVILYV (255 aa). Substrate contacts are provided by residues D2378, 2408–2414, and Q2452; that span reads CSAGIGR. Catalysis depends on C2408, which acts as the Phosphocysteine intermediate. The tract at residues 2408 to 2414 is substrate; the sequence is CSAGIGR.

This sequence belongs to the protein-tyrosine phosphatase family. Non-receptor class subfamily. Interacts (via the first PDZ domain) with PLEKHA1 and PLEKHA2. Interacts (via the second PDZ domain) with TNFRSF6 (Fas receptor) (via C-terminus). Interacts (via the second PDZ domain) with TRIP6 (via the third LIM domain and C-terminus). Interacts (via the third PDZ domain) with NGFR (via C-terminal SVP motif) and PKN2 (via C-terminus). Interacts (via the second or fourth PDZ domains) with PDLIM4 (via C-terminus only or via combined C-terminus and LIM domain, but not LIM domain only). Found in a complex with PDLIM4 and TRIP6. Interacts with PDLIM4; this interaction results in dephosphorylation of SRC 'Tyr-419' by this protein leading to its inactivation. Interacts with BRD7. Interacts with RAPGEF6. Interacts with ARHGAP29. Interacts with PIK3R2; dephosphorylates PIK3R2. Interacts with FBXL2. Interacts (via the FERM domain) with ENTR1. Found in a complex with ENTR1, PTPN13 and GIT1. Expressed in keratinocytes (at protein level). Present in most tissues with the exception of the liver and skeletal muscle. Most abundant in lung, kidney and fetal brain.

The protein resides in the cytoplasm. Its subcellular location is the cytoskeleton. It is found in the nucleus. It localises to the cell projection. The protein localises to the lamellipodium. It carries out the reaction O-phospho-L-tyrosyl-[protein] + H2O = L-tyrosyl-[protein] + phosphate. Functionally, tyrosine phosphatase which negatively regulates FAS-induced apoptosis and NGFR-mediated pro-apoptotic signaling. May regulate phosphoinositide 3-kinase (PI3K) signaling through dephosphorylation of PIK3R2. The polypeptide is Tyrosine-protein phosphatase non-receptor type 13 (PTPN13) (Homo sapiens (Human)).